Here is a 154-residue protein sequence, read N- to C-terminus: Probable chemoreceptor glutamine deamidase CheD (154 aa).

Belongs to the CheD family.

It carries out the reaction L-glutaminyl-[protein] + H2O = L-glutamyl-[protein] + NH4(+). Probably deamidates glutamine residues to glutamate on methyl-accepting chemotaxis receptors (MCPs), playing an important role in chemotaxis. In Methanococcus maripaludis (strain C5 / ATCC BAA-1333), this protein is Probable chemoreceptor glutamine deamidase CheD.